Here is a 122-residue protein sequence, read N- to C-terminus: Large ribosomal subunit protein uL14 (122 aa).

This sequence belongs to the universal ribosomal protein uL14 family. In terms of assembly, part of the 50S ribosomal subunit. Forms a cluster with proteins L3 and L19. In the 70S ribosome, L14 and L19 interact and together make contacts with the 16S rRNA in bridges B5 and B8.

Its function is as follows. Binds to 23S rRNA. Forms part of two intersubunit bridges in the 70S ribosome. In Cyanothece sp. (strain PCC 7425 / ATCC 29141), this protein is Large ribosomal subunit protein uL14.